Here is a 385-residue protein sequence, read N- to C-terminus: MNIKLPPFIELFRQLIATPSISATDISIDQSNESLINLLASWLKEIGFEIEIQPVPETLGKYNLLATLGRGPGGLLLCGHTDTVPFDEGLWTKDPFTLTERDNKLYGLGTADMKGFFAFIIDALRDIDVSKITRPLYILATADEETTMAGARYFAASTTIRPDFAIIGEPTSLHPICAHKGHLSNAIRIVGQSGHSSDPDRGINAIDLMHESIGHLIELRNTLKEHYNNPAFTIPYPTMNFGYIHGGDAVNRICAHCELHMDIRPLPGLTLQDLNGLLNEALEPMKQRWPGRLTIDELHSPIPGYECPTDHKMVDVIEKLLGRKAETVNYCTEAPFIQKVCPTLVLGPGSIEQAHQPDEFIDMSFIGPTRKIISQLIDHFCLSNN.

Position 80 (His80) interacts with Zn(2+). Asp82 is a catalytic residue. Asp112 lines the Zn(2+) pocket. Catalysis depends on Glu144, which acts as the Proton acceptor. 3 residues coordinate Zn(2+): Glu145, Glu169, and His355.

Belongs to the peptidase M20A family. ArgE subfamily. As to quaternary structure, homodimer. It depends on Zn(2+) as a cofactor. Co(2+) serves as cofactor. Requires glutathione as cofactor.

Its subcellular location is the cytoplasm. It carries out the reaction N(2)-acetyl-L-ornithine + H2O = L-ornithine + acetate. It participates in amino-acid biosynthesis; L-arginine biosynthesis; L-ornithine from N(2)-acetyl-L-ornithine (linear): step 1/1. In terms of biological role, catalyzes the hydrolysis of the amide bond of N(2)-acetylated L-amino acids. Cleaves the acetyl group from N-acetyl-L-ornithine to form L-ornithine, an intermediate in L-arginine biosynthesis pathway, and a branchpoint in the synthesis of polyamines. The protein is Acetylornithine deacetylase of Photorhabdus laumondii subsp. laumondii (strain DSM 15139 / CIP 105565 / TT01) (Photorhabdus luminescens subsp. laumondii).